A 188-amino-acid polypeptide reads, in one-letter code: Small ribosomal subunit protein bS18c (188 aa).

Residues 1–19 (MNNQSFNNFSQVNSNSSFF) are compositionally biased toward low complexity. A disordered region spans residues 1–79 (MNNQSFNNFS…TSNKRKVLSV (79 aa)). Residues 25 to 71 (NLQNTNLEMTNGTNPPSSFSKQTPQKRQSFGTNTNFSKGNSSRGSTS) show a composition bias toward polar residues.

It belongs to the bacterial ribosomal protein bS18 family. As to quaternary structure, part of the 30S ribosomal subunit.

The protein localises to the plastid. It is found in the chloroplast. In Tetradesmus obliquus (Green alga), this protein is Small ribosomal subunit protein bS18c.